The chain runs to 227 residues: GTP:AMP phosphotransferase AK3, mitochondrial (227 aa).

5 residues coordinate GTP: G17, G19, K20, G21, and T22. K20 is subject to N6-succinyllysine. K34 bears the N6-acetyllysine mark. S37 is subject to Phosphoserine. The segment at 37-66 (SSGDLLRDNMLRGTEIGVLAKAFIDQGKLI) is NMP. 2 residues coordinate AMP: S38 and R43. An N6-succinyllysine modification is found at K57. K64 contacts AMP. N6-acetyllysine; alternate is present on residues K64 and K80. K64 and K80 each carry N6-succinyllysine; alternate. G91, R94, and Q98 together coordinate AMP. The interval 127–164 (ARWIHPASGRVYNIEFNPPKTVGIDDLTGEPLIQREDD) is LID. 5 residues coordinate GTP: R128, Y138, N139, R161, and R172. N6-acetyllysine; alternate occurs at positions 174 and 189. Residues K174 and K189 each carry the N6-succinyllysine; alternate modification. T201 serves as a coordination point for GTP. K203 carries the N6-acetyllysine modification.

Belongs to the adenylate kinase family. AK3 subfamily. Monomer.

The protein resides in the mitochondrion matrix. The enzyme catalyses a ribonucleoside 5'-triphosphate + AMP = a ribonucleoside 5'-diphosphate + ADP. It carries out the reaction GTP + AMP = GDP + ADP. The catalysed reaction is ITP + AMP = IDP + ADP. Its function is as follows. Mitochondrial adenylate kinase with a specific GTP:AMP phosphotransferase activity. Could also use ITP as phosphate donor. Its physiological function is to recycle GTP into GDP which is necessary for the TCA cycle in the mitochondrial matrix. The polypeptide is GTP:AMP phosphotransferase AK3, mitochondrial (Pongo abelii (Sumatran orangutan)).